The chain runs to 389 residues: Mannuronan synthase (389 aa).

The region spanning 16–116 (QRQFARVKLP…EVAALRYLIT (101 aa)) is the PilZ domain.

It belongs to the Alg44 family.

The protein resides in the periplasm. The enzyme catalyses [(1-&gt;4)-beta-D-mannuronosyl](n) + GDP-alpha-D-mannuronate = [(1-&gt;4)-beta-D-mannuronosyl](n+1) + GDP + H(+). It participates in glycan biosynthesis; alginate biosynthesis. Required for alginate biosynthesis. The chain is Mannuronan synthase (alg44) from Pseudomonas aeruginosa (strain ATCC 15692 / DSM 22644 / CIP 104116 / JCM 14847 / LMG 12228 / 1C / PRS 101 / PAO1).